A 914-amino-acid chain; its full sequence is Polyribonucleotide nucleotidyltransferase (914 aa).

Residues 407–427 (YMHNYEMPPYSTGETGRVGSP) are disordered. The Mg(2+) site is built by Asp521 and Asp527. The region spanning 587–646 (PRIITTSVPVEKIGEVIGPKGKMINQIQEDTGAEIAIEDDGTVFISSEGGEAAKKAKSII) is the KH domain. An S1 motif domain is found at 658-730 (GETYNGKVVK…DRGKISLAIP (73 aa)). Residues 727–914 (LAIPGFEDQE…VRRDFDPFED (188 aa)) form a disordered region. Composition is skewed to basic and acidic residues over residues 742 to 789 (SRGD…RRSD), 797 to 865 (DRPR…DRRG), and 873 to 899 (RGSDRNPRYATDDNYDDYRADREERTE).

It belongs to the polyribonucleotide nucleotidyltransferase family. The cofactor is Mg(2+).

The protein localises to the cytoplasm. The enzyme catalyses RNA(n+1) + phosphate = RNA(n) + a ribonucleoside 5'-diphosphate. Its function is as follows. Involved in mRNA degradation. Catalyzes the phosphorolysis of single-stranded polyribonucleotides processively in the 3'- to 5'-direction. This Bifidobacterium longum subsp. infantis (strain ATCC 15697 / DSM 20088 / JCM 1222 / NCTC 11817 / S12) protein is Polyribonucleotide nucleotidyltransferase.